A 190-amino-acid chain; its full sequence is Secretory phospholipase A2 (190 aa).

Residues 1-15 form the signal peptide; the sequence is MKLAYFSSLLPLALA. Cys-62 and Cys-78 form a disulfide bridge. Ca(2+) is bound at residue Ala-65. His-81 is a catalytic residue. Asp-82 contacts Ca(2+).

It belongs to the phospholipase A2 family. The cofactor is Ca(2+).

The protein resides in the lipid droplet. It is found in the secreted. It carries out the reaction a 1,2-diacyl-sn-glycero-3-phosphocholine + H2O = a 1-acyl-sn-glycero-3-phosphocholine + a fatty acid + H(+). Secretory phospholipase that catalyzes the calcium-dependent hydrolysis of the 2-acyl groups in 3-sn-phosphoglycerides. Increases the ability to utilize insect-derived nutrients and lipids, and promotes lipid dropplets accumulation. Plays a role in virulence, including more efficient penetration of the insect cuticle and evasion of host immune response by repressing the expression of host immunity genes. The protein is Secretory phospholipase A2 of Beauveria bassiana (strain ARSEF 2860) (White muscardine disease fungus).